The primary structure comprises 4490 residues: Dynein axonemal heavy chain 8 (4490 aa).

A Phosphoserine modification is found at S674. AAA stretches follow at residues 1808 to 2030 (YQNE…VLRT), 2090 to 2309 (NAVA…KLNL), 2416 to 2669 (YYPT…IWQG), and 2780 to 3034 (QFNE…YRRR). Residues 1846–1853 (GPAGTGKT) and 2128–2135 (GPSGSGKT) contribute to the ATP site. The interval 3049–3346 (YKNIYAEKVK…MDLLNDADTC (298 aa)) is stalk. 3 coiled-coil regions span residues 3072-3164 (DKLM…ALNT), 3290-3354 (LKAN…QAAS), and 3594-3630 (RRVILTEKQELEAERVKLLEDVTFNKRKMKELEDNLL). AAA regions lie at residues 3432-3662 (LVDP…EVSE) and 3877-4091 (ARKY…FIQN).

It belongs to the dynein heavy chain family. As to quaternary structure, consists of at least two heavy chains and a number of intermediate and light chains. Expressed in spermatozoa (at protein level). Not detected in airway epithelial cells (at protein level).

The protein resides in the cytoplasm. The protein localises to the cytoskeleton. It localises to the flagellum axoneme. Its function is as follows. Force generating protein component of the outer dynein arms (ODAs) in the sperm flagellum. Produces force towards the minus ends of microtubules. Dynein has ATPase activity; the force-producing power stroke is thought to occur on release of ADP. Involved in sperm motility; implicated in sperm flagellar assembly. This Homo sapiens (Human) protein is Dynein axonemal heavy chain 8.